A 323-amino-acid polypeptide reads, in one-letter code: Transposase for insertion sequence element IS6120 (323 aa).

A disordered region spans residues 300–323; sequence ERPTDITPPTSPSDGGQHAGTEVA. Residues 304–313 show a composition bias toward low complexity; that stretch reads DITPPTSPSD.

This sequence belongs to the transposase mutator family.

Functionally, required for the transposition of the insertion element. The protein is Transposase for insertion sequence element IS6120 of Mycolicibacterium smegmatis (Mycobacterium smegmatis).